A 547-amino-acid polypeptide reads, in one-letter code: Nitrate transporter 2.1 (547 aa).

A run of 12 helical transmembrane segments spans residues 53–73 (WICF…APII), 86–106 (NAGV…GIVV), 113–133 (YGAA…ALVT), 143–163 (FFIG…GTMF), 173–193 (AIAA…MPLI), 211–231 (AFFV…LLGI), 262–280 (LGNY…SFGV), 296–316 (FGLN…MNLF), 338–358 (IWAL…LGKV), 366–386 (IVIM…HFGI), 400–420 (GLVG…WFAG), and 433–453 (GFVY…FIWF).

The protein belongs to the major facilitator superfamily. Nitrate/nitrite porter (TC 2.A.1.8) family.

It is found in the cell membrane. With respect to regulation, nitrite transport mediated by system 1 is very sensitive to inhibition by nitrate. Functionally, involved in nitrate transport, but does not seem to be able to mediate transport by its own. Acts as a dual component transporter with NAR2 (system 1). Imports nitrate with high affinity when expressed with NAR2 in a heterologous system (Xenopus oocytes). Involved in a high affinity and a high capacity transport specific for both nitrate and nitrite. This chain is Nitrate transporter 2.1, found in Chlamydomonas reinhardtii (Chlamydomonas smithii).